A 949-amino-acid polypeptide reads, in one-letter code: Glycine dehydrogenase (decarboxylating) (949 aa).

K700 bears the N6-(pyridoxal phosphate)lysine mark.

The protein belongs to the GcvP family. The glycine cleavage system is composed of four proteins: P, T, L and H. Pyridoxal 5'-phosphate serves as cofactor.

It carries out the reaction N(6)-[(R)-lipoyl]-L-lysyl-[glycine-cleavage complex H protein] + glycine + H(+) = N(6)-[(R)-S(8)-aminomethyldihydrolipoyl]-L-lysyl-[glycine-cleavage complex H protein] + CO2. In terms of biological role, the glycine cleavage system catalyzes the degradation of glycine. The P protein binds the alpha-amino group of glycine through its pyridoxal phosphate cofactor; CO(2) is released and the remaining methylamine moiety is then transferred to the lipoamide cofactor of the H protein. The sequence is that of Glycine dehydrogenase (decarboxylating) from Christiangramia forsetii (strain DSM 17595 / CGMCC 1.15422 / KT0803) (Gramella forsetii).